A 514-amino-acid polypeptide reads, in one-letter code: Adenylosuccinate synthetase 1, chloroplastic (514 aa).

Residues 1 to 73 (MAMAAAAAVA…AQAIERESVK (73 aa)) constitute a chloroplast transit peptide. Residues 100–106 (GDEGKGK) and 128–130 (GHT) contribute to the GTP site. The active-site Proton acceptor is the aspartate 101. Aspartate 101 and glycine 128 together coordinate Mg(2+). Residues 101–104 (DEGK), 126–129 (NAGH), threonine 218, arginine 232, glutamine 312, threonine 327, and arginine 391 contribute to the IMP site. Residue histidine 129 is the Proton donor of the active site. 387–393 (TTTGRPR) provides a ligand contact to substrate. GTP contacts are provided by residues arginine 393, 419-421 (KLD), and 502-504 (GVG).

This sequence belongs to the adenylosuccinate synthetase family. As to quaternary structure, homodimer. It depends on Mg(2+) as a cofactor.

The protein localises to the plastid. It is found in the chloroplast. The catalysed reaction is IMP + L-aspartate + GTP = N(6)-(1,2-dicarboxyethyl)-AMP + GDP + phosphate + 2 H(+). Its pathway is purine metabolism; AMP biosynthesis via de novo pathway; AMP from IMP: step 1/2. Its function is as follows. Plays an important role in the de novo pathway and in the salvage pathway of purine nucleotide biosynthesis. Catalyzes the first committed step in the biosynthesis of AMP from IMP. This chain is Adenylosuccinate synthetase 1, chloroplastic, found in Physcomitrium patens (Spreading-leaved earth moss).